A 167-amino-acid polypeptide reads, in one-letter code: Leukotoxin-activating lysine-acyltransferase LktC serotype A11 (167 aa).

Residues His-22 and Asp-91 contribute to the active site.

The protein belongs to the RTX toxin acyltransferase family.

The protein resides in the cytoplasm. It catalyses the reaction a fatty acyl-[ACP] + L-lysyl-[protein] = N(6)-(fatty acyl)-L-lysyl-[protein] + holo-[ACP] + H(+). Its function is as follows. Involved in fatty acylation of the protoxin (LktA) at two internal lysine residues, thereby converting it to the active toxin. This Mannheimia haemolytica (Pasteurella haemolytica) protein is Leukotoxin-activating lysine-acyltransferase LktC serotype A11 (lktC).